Here is a 239-residue protein sequence, read N- to C-terminus: Ribonuclease PH (239 aa).

Phosphate contacts are provided by residues arginine 87 and 125–127 (GTR).

This sequence belongs to the RNase PH family. As to quaternary structure, homohexameric ring arranged as a trimer of dimers.

The catalysed reaction is tRNA(n+1) + phosphate = tRNA(n) + a ribonucleoside 5'-diphosphate. Its function is as follows. Phosphorolytic 3'-5' exoribonuclease that plays an important role in tRNA 3'-end maturation. Removes nucleotide residues following the 3'-CCA terminus of tRNAs; can also add nucleotides to the ends of RNA molecules by using nucleoside diphosphates as substrates, but this may not be physiologically important. Probably plays a role in initiation of 16S rRNA degradation (leading to ribosome degradation) during starvation. This chain is Ribonuclease PH, found in Dehalococcoides mccartyi (strain ATCC BAA-2266 / KCTC 15142 / 195) (Dehalococcoides ethenogenes (strain 195)).